The following is a 223-amino-acid chain: MSLYATQDEKKQAAAKAALKHLPKGGILGVGTGSTVNFLIDLLPELQLEAAVASSQATADRLKKLGIEVVDMNHVGSLDAYVDGADEIDRHMHMIKGGGAALTREKIVASIAKKFVCIVDDSKWVDQLGRDFPLPVEVIPMARSAVARKLVSLGGDPVYREGVVTDNGNVILDVFNLNILNAIDLEKTINNIPGVVTNGIFALNPATIAIVATNDGIEERTAQ.

Residues 32–35, 83–86, and 96–99 each bind substrate; these read TGST, DGAD, and KGGG. The Proton acceptor role is filled by Glu-105. Lys-123 serves as a coordination point for substrate.

This sequence belongs to the ribose 5-phosphate isomerase family. Homodimer.

The enzyme catalyses aldehydo-D-ribose 5-phosphate = D-ribulose 5-phosphate. It participates in carbohydrate degradation; pentose phosphate pathway; D-ribose 5-phosphate from D-ribulose 5-phosphate (non-oxidative stage): step 1/1. In terms of biological role, catalyzes the reversible conversion of ribose-5-phosphate to ribulose 5-phosphate. This Acinetobacter baumannii (strain AYE) protein is Ribose-5-phosphate isomerase A.